Reading from the N-terminus, the 207-residue chain is MSEETQYEYLVPLEKYLSAGVRLGTRLSNKYLEERGFIYAVRPDGLRIFDIKKIDERLRIAAKFISRYQPDRILVHTTRPYGFKPVQMFCKFVGCRALTGRFIPGTLTNPYLPNYTEIDLLFVVDPKLDAQAVAEAAKMGIPIIALVDTDTPHQYIDFMIPCNNKGRRSLALIFWILARQVLRERGELKPDQDLPVPPEEFETRLIQ.

Belongs to the universal ribosomal protein uS2 family.

The protein is Small ribosomal subunit protein uS2 of Pyrobaculum islandicum (strain DSM 4184 / JCM 9189 / GEO3).